Reading from the N-terminus, the 474-residue chain is Pyruvate kinase (474 aa).

Residue Arg-33 participates in substrate binding. K(+)-binding residues include Asn-35, Ser-37, and Asp-67. ATP is bound at residue 35–38; sequence NFSH. Residues Arg-74 and Lys-155 each coordinate ATP. Residue Glu-220 participates in Mg(2+) binding. Substrate-binding residues include Gly-243, Asp-244, and Thr-276. Residue Asp-244 participates in Mg(2+) binding.

Belongs to the pyruvate kinase family. In terms of assembly, homotetramer. It depends on Mg(2+) as a cofactor. Requires K(+) as cofactor.

It catalyses the reaction pyruvate + ATP = phosphoenolpyruvate + ADP + H(+). Its pathway is carbohydrate degradation; glycolysis; pyruvate from D-glyceraldehyde 3-phosphate: step 5/5. This chain is Pyruvate kinase (pyk), found in Corynebacterium efficiens (strain DSM 44549 / YS-314 / AJ 12310 / JCM 11189 / NBRC 100395).